The chain runs to 41 residues: uncharacterized protein (41 aa).

Residues 1–41 form a disordered region; sequence MGKKHRNRITGQKKNNHIPEKDIIAAEEAHGKEYSAAKRKP. A compositionally biased stretch (basic and acidic residues) spans 17-41; sequence HIPEKDIIAAEEAHGKEYSAAKRKP.

This is an uncharacterized protein from Bacillus subtilis (strain 168).